We begin with the raw amino-acid sequence, 406 residues long: Argininosuccinate synthase (406 aa).

Residues 11 to 19 and Ala-38 contribute to the ATP site; that span reads AYSGGLDTS. The L-citrulline site is built by Tyr-91 and Ser-96. Gly-121 is a binding site for ATP. L-aspartate is bound by residues Thr-123, Asn-127, and Asp-128. Residue Asn-127 participates in L-citrulline binding. Residues Arg-131, Ser-181, Ser-190, Glu-266, and Tyr-278 each contribute to the L-citrulline site.

The protein belongs to the argininosuccinate synthase family. Type 1 subfamily. As to quaternary structure, homotetramer.

The protein resides in the cytoplasm. It catalyses the reaction L-citrulline + L-aspartate + ATP = 2-(N(omega)-L-arginino)succinate + AMP + diphosphate + H(+). It functions in the pathway amino-acid biosynthesis; L-arginine biosynthesis; L-arginine from L-ornithine and carbamoyl phosphate: step 2/3. This chain is Argininosuccinate synthase, found in Campylobacter jejuni subsp. jejuni serotype O:6 (strain 81116 / NCTC 11828).